The primary structure comprises 130 residues: Small ribosomal subunit protein uS8 (130 aa).

This sequence belongs to the universal ribosomal protein uS8 family. In terms of assembly, part of the 30S ribosomal subunit. Contacts proteins S5 and S12.

Functionally, one of the primary rRNA binding proteins, it binds directly to 16S rRNA central domain where it helps coordinate assembly of the platform of the 30S subunit. In Shewanella sp. (strain MR-7), this protein is Small ribosomal subunit protein uS8.